Reading from the N-terminus, the 274-residue chain is Exosome complex component Rrp42 (274 aa).

It belongs to the RNase PH family. Rrp42 subfamily. Component of the archaeal exosome complex. Forms a hexameric ring-like arrangement composed of 3 Rrp41-Rrp42 heterodimers. The hexameric ring associates with a trimer of Rrp4 and/or Csl4 subunits.

Its subcellular location is the cytoplasm. Functionally, non-catalytic component of the exosome, which is a complex involved in RNA degradation. Contributes to the structuring of the Rrp41 active site. In Pyrococcus horikoshii (strain ATCC 700860 / DSM 12428 / JCM 9974 / NBRC 100139 / OT-3), this protein is Exosome complex component Rrp42.